The chain runs to 932 residues: UPF0182 protein Amet_0022 (932 aa).

A run of 7 helical transmembrane segments spans residues 14-34, 60-80, 104-124, 166-186, 208-228, 256-276, and 286-306; these read VIIG…SEIL, LQIG…YLIG, ILIL…AGSL, TSIL…MFLI, LLQI…LVLA, VTLW…TGVV, and LLLI…VISL.

Belongs to the UPF0182 family.

It localises to the cell membrane. This is UPF0182 protein Amet_0022 from Alkaliphilus metalliredigens (strain QYMF).